The primary structure comprises 653 residues: Testicular spindle-associated protein SHCBP1L (653 aa).

Positions 1–65 are disordered; it reads MASGSKASVP…PVKGKAGRET (65 aa). S8 is subject to Phosphoserine. Residues 28 to 41 show a composition bias toward polar residues; it reads SAVSGDTAAATTLK. Residues 46–56 show a composition bias toward low complexity; the sequence is PVRSVVASPRP. S53 is modified (phosphoserine). Residues 299-326 adopt a coiled-coil conformation; the sequence is IAQRFKKTLEKYKNKRVELIEYQSNIKE. 4 PbH1 repeats span residues 493-514, 515-537, 538-571, and 574-596; these read SGHM…CVLT, GAAL…ELYP, GSIA…NMKV, and APKL…SILQ. At K570 the chain carries N6-acetyllysine. K645 is subject to N6-acetyllysine.

Interacts with HSPA2; this interaction may promote the recruitment of HSPA2 to the spindle. As to expression, expressed in spermatocytes and elongating spermatids inside the seminiferous tubules (at protein level). Testis-specific.

The protein localises to the cytoplasm. It localises to the cytoskeleton. The protein resides in the spindle. In terms of biological role, testis-specific spindle-associated factor that plays a role in spermatogenesis. In association with HSPA2, participates in the maintenance of spindle integrity during meiosis in male germ cells. This is Testicular spindle-associated protein SHCBP1L from Homo sapiens (Human).